A 409-amino-acid chain; its full sequence is G2/mitotic-specific cyclin-B (409 aa).

It belongs to the cyclin family. Cyclin AB subfamily. Interacts with the CDK1 protein kinase to form a serine/threonine kinase holoenzyme complex also known as maturation promoting factor (MPF). The cyclin subunit imparts substrate specificity to the complex.

Its function is as follows. Essential for the control of the cell cycle at the G2/M (mitosis) transition. This is G2/mitotic-specific cyclin-B from Arbacia punctulata (Punctuate sea urchin).